The chain runs to 1011 residues: Vacuolar membrane protease (1011 aa).

The Cytoplasmic portion of the chain corresponds to 1–9 (MSNPFAFRS). Residues 10–30 (AQVTFWTTVVYLALLVPLVVI) traverse the membrane as a helical segment. Residues 31–378 (NEGVPPVQPD…TFVLFGLRGM (348 aa)) lie on the Vacuolar side of the membrane. N-linked (GlcNAc...) asparagine glycosylation is found at asparagine 50 and asparagine 106. 2 residues coordinate Zn(2+): histidine 159 and aspartate 171. The active-site Proton acceptor is glutamate 205. Zn(2+)-binding residues include glutamate 206, glutamate 231, and histidine 304. Asparagine 331 is a glycosylation site (N-linked (GlcNAc...) asparagine). Residues 379–399 (FAWSLTVLIVGPLTLFGMMYL) form a helical membrane-spanning segment. The Cytoplasmic portion of the chain corresponds to 400–439 (VHKQGKGYAFHTKLRATSDSSSEDGDDEDGEVIRLGGWKG). The chain crosses the membrane as a helical span at residues 440-460 (FFRFPFALIVAGALVTGAALL). Topologically, residues 461–471 (LRKMNPFIIYS) are vacuolar. Residues 472–492 (SEYAVWAMMISLFYFGFWLIM) traverse the membrane as a helical segment. Over 493 to 505 (RGSSYTRPSALHR) the chain is Cytoplasmic. The helical transmembrane segment at 506–526 (LYVHIWLFILGWVALVFATVL) threads the bilayer. At 527–536 (EDRMRIASGY) the chain is on the vacuolar side. Residues 537–557 (IFVFWESQVFLATLVAVCELF) form a helical membrane-spanning segment. The Cytoplasmic segment spans residues 558–682 (SLPRKIDFAR…WSGPMVTSTW (125 aa)). The span at 595–609 (EATSPQRAGQSSNSP) shows a compositional bias: polar residues. 2 disordered regions span residues 595–627 (EATS…LFRK) and 650–671 (IMDS…EGEQ). The segment covering 610–622 (QEDDEDDVPDEET) has biased composition (acidic residues). A helical membrane pass occupies residues 683-703 (ILQFLLLGPFMVILGGQVGLL). The Vacuolar segment spans residues 704–719 (LTSAVNQTGVDGSSLL). A glycan (N-linked (GlcNAc...) asparagine) is linked at asparagine 709. A helical membrane pass occupies residues 720–740 (APYLMIAALSAILLMPLSPFI). Residues 741-747 (HRVTKHV) lie on the Cytoplasmic side of the membrane. A helical transmembrane segment spans residues 748–768 (PLFLLAVAFATLIYSLVAFPF). At 769–1011 (SPRAPYKTFF…LVEGSKAFKV (243 aa)) the chain is on the vacuolar side. N-linked (GlcNAc...) asparagine glycosylation is present at asparagine 872.

It belongs to the peptidase M28 family. It depends on Zn(2+) as a cofactor.

It localises to the vacuole membrane. In terms of biological role, may be involved in vacuolar sorting and osmoregulation. The protein is Vacuolar membrane protease of Pyricularia oryzae (strain 70-15 / ATCC MYA-4617 / FGSC 8958) (Rice blast fungus).